A 190-amino-acid polypeptide reads, in one-letter code: Iron-sulfur protein (190 aa).

The region spanning 8-36 (VIIYANPDHCLSCHSCELACAVAHSGGHD) is the 4Fe-4S ferredoxin-type 1 domain. The [4Fe-4S] cluster site is built by Cys17, Cys20, Cys23, Cys27, Cys65, Cys68, Cys73, Cys77, Cys96, Cys99, Cys102, Cys106, Cys133, Cys136, Cys150, and Cys154. 2 4Fe-4S ferredoxin-type domains span residues 87 to 116 (GQVQ…VRSE) and 133 to 164 (CDLC…MVDL).

In terms of biological role, the carbon monoxide dehydrogenase (CODH) oxidizes carbon monoxide coupled, via CooF, to the reduction of a hydrogen cation by a hydrogenase (probably CooH). CooF is required in stoichiometric amounts in vitro for anchoring CODH to the membrane as well as for conveying the electrons to the hydrogenase. This Rhodospirillum rubrum protein is Iron-sulfur protein (cooF).